An 81-amino-acid polypeptide reads, in one-letter code: UPF0180 protein YkuS (81 aa).

It belongs to the UPF0180 family.

The polypeptide is UPF0180 protein YkuS (ykuS) (Bacillus subtilis (strain 168)).